Consider the following 197-residue polypeptide: uncharacterized protein (197 aa).

Residues 7–27 (PISVGQMVLICIFILIILFVI) traverse the membrane as a helical segment.

The protein belongs to the IIV-6 307L family.

The protein localises to the membrane. This is an uncharacterized protein from Acheta domesticus (House cricket).